The following is a 230-amino-acid chain: Type II restriction enzyme MjaV (230 aa).

It catalyses the reaction Endonucleolytic cleavage of DNA to give specific double-stranded fragments with terminal 5'-phosphates.. In terms of biological role, a P subtype restriction enzyme that recognizes the double-stranded sequence 5'-GTAC-3'; the cleavage site is unknown. This Methanocaldococcus jannaschii (strain ATCC 43067 / DSM 2661 / JAL-1 / JCM 10045 / NBRC 100440) (Methanococcus jannaschii) protein is Type II restriction enzyme MjaV (mjaVR).